The primary structure comprises 329 residues: Small ribosomal subunit protein RACK1 (329 aa).

WD repeat units follow at residues 19 to 59, 68 to 107, 110 to 149, 154 to 193, 196 to 235, 237 to 275, and 295 to 328; these read GHNG…ATSP, GHSH…STRL, GHTQ…KFTL, AHQD…CNHT, DHTG…PLYK, EARN…VLAE, and PKAP…KSSS.

The protein belongs to the WD repeat G protein beta family. Ribosomal protein RACK1 subfamily.

The polypeptide is Small ribosomal subunit protein RACK1 (gpbB) (Dictyostelium discoideum (Social amoeba)).